The sequence spans 395 residues: Crh-like protein 5 (395 aa).

A signal peptide spans 1–19 (MYFKYTAAALAAVLPLCSA). Cysteines 25 and 32 form a disulfide. A GH16 domain is found at 45 to 230 (ADFTSASALD…WAGGLTDYSA (186 aa)). Residue glutamate 119 is the Nucleophile of the active site. The active-site Proton donor is the glutamate 123. Glutamate 123, arginine 203, tryptophan 207, and threonine 218 together coordinate chitin. The disordered stretch occupies residues 271–374 (ISSSSSVTSS…PELSQGAAGS (104 aa)). Composition is skewed to low complexity over residues 272–338 (SSSS…SNTG) and 348–364 (GSSSSTGSSTSAGASAT). The N-linked (GlcNAc...) asparagine glycan is linked to asparagine 319. Residue glycine 370 is the site of GPI-like-anchor amidated glycine attachment. A propeptide spans 371 to 395 (AAGSIKGSVTACALVFGAVAAVLAF) (removed in mature form).

It belongs to the glycosyl hydrolase 16 family. CRH1 subfamily. In terms of processing, the GPI-like anchor contains a phosphoceramide lipid group. The anchor position has not been determined.

It is found in the cell membrane. The protein localises to the secreted. The protein resides in the cell wall. The enzyme catalyses Random endo-hydrolysis of N-acetyl-beta-D-glucosaminide (1-&gt;4)-beta-linkages in chitin and chitodextrins.. In terms of biological role, dual chitinase/transglycosylase that plays a role in cell wall architecture. Chitinase and transglycosylase activities are coupled. Required for the polysaccharide cross-linking at the septa and the cell wall. More specifically, transfers chitin to 1,6-beta-glucan in the cell wall. Chr5 shows acceptor substrate promiscuity and is also able to cross-link chitin to chitin. This Aspergillus fumigatus (strain ATCC MYA-4609 / CBS 101355 / FGSC A1100 / Af293) (Neosartorya fumigata) protein is Crh-like protein 5.